We begin with the raw amino-acid sequence, 504 residues long: L-carnitine/gamma-butyrobetaine antiporter (504 aa).

Transmembrane regions (helical) follow at residues 10 to 30 (IEPK…WLTV), 51 to 71 (WGWA…WLVF), 92 to 112 (IFMM…SIEI), 143 to 163 (GPLP…FFFV), 195 to 215 (FYLV…TPLV), 231 to 251 (LDAI…ACGL), 263 to 283 (SYLS…SFIM), 316 to 336 (WTVF…IFLA), 347 to 367 (LCFG…TVLG), 398 to 418 (WAAL…CFIA), 446 to 466 (LLVR…LLAL), and 475 to 495 (AIIA…LSFI).

This sequence belongs to the BCCT transporter (TC 2.A.15) family. CaiT subfamily. In terms of assembly, homotrimer.

It localises to the cell inner membrane. It catalyses the reaction 4-(trimethylamino)butanoate(in) + (R)-carnitine(out) = 4-(trimethylamino)butanoate(out) + (R)-carnitine(in). It functions in the pathway amine and polyamine metabolism; carnitine metabolism. Its function is as follows. Catalyzes the exchange of L-carnitine for gamma-butyrobetaine. The polypeptide is L-carnitine/gamma-butyrobetaine antiporter (Escherichia coli O8 (strain IAI1)).